The sequence spans 221 residues: 3-dehydroquinate dehydratase (221 aa).

3-dehydroquinate contacts are provided by residues 33–35 and arginine 63; that span reads EIR. The Proton donor/acceptor role is filled by histidine 118. Catalysis depends on lysine 144, which acts as the Schiff-base intermediate with substrate. Residues arginine 181, threonine 200, and glutamine 204 each coordinate 3-dehydroquinate.

This sequence belongs to the type-I 3-dehydroquinase family. In terms of assembly, homodimer.

It catalyses the reaction 3-dehydroquinate = 3-dehydroshikimate + H2O. Its pathway is metabolic intermediate biosynthesis; chorismate biosynthesis; chorismate from D-erythrose 4-phosphate and phosphoenolpyruvate: step 3/7. Its function is as follows. Involved in the third step of the chorismate pathway, which leads to the biosynthesis of aromatic amino acids. Catalyzes the cis-dehydration of 3-dehydroquinate (DHQ) and introduces the first double bond of the aromatic ring to yield 3-dehydroshikimate. The sequence is that of 3-dehydroquinate dehydratase from Methanothermobacter thermautotrophicus (strain ATCC 29096 / DSM 1053 / JCM 10044 / NBRC 100330 / Delta H) (Methanobacterium thermoautotrophicum).